The sequence spans 337 residues: Anthranilate phosphoribosyltransferase (337 aa).

5-phospho-alpha-D-ribose 1-diphosphate contacts are provided by residues Gly-80, 83-84, Thr-88, 90-93, 108-116, and Ser-120; these read GD, NIST, and KHGNRAVSS. Position 80 (Gly-80) interacts with anthranilate. Ser-92 contributes to the Mg(2+) binding site. Residue Asn-111 participates in anthranilate binding. Arg-166 lines the anthranilate pocket. Asp-224 and Glu-225 together coordinate Mg(2+).

It belongs to the anthranilate phosphoribosyltransferase family. As to quaternary structure, homodimer. Mg(2+) is required as a cofactor.

The catalysed reaction is N-(5-phospho-beta-D-ribosyl)anthranilate + diphosphate = 5-phospho-alpha-D-ribose 1-diphosphate + anthranilate. It functions in the pathway amino-acid biosynthesis; L-tryptophan biosynthesis; L-tryptophan from chorismate: step 2/5. In terms of biological role, catalyzes the transfer of the phosphoribosyl group of 5-phosphorylribose-1-pyrophosphate (PRPP) to anthranilate to yield N-(5'-phosphoribosyl)-anthranilate (PRA). The protein is Anthranilate phosphoribosyltransferase of Anaeromyxobacter dehalogenans (strain 2CP-1 / ATCC BAA-258).